The primary structure comprises 217 residues: 3,4-dihydroxy-2-butanone 4-phosphate synthase (217 aa).

D-ribulose 5-phosphate contacts are provided by residues 37 to 38 (RE), D42, 150 to 154 (RGGHT), and E174. Residue E38 participates in Mg(2+) binding. H153 is a Mg(2+) binding site.

This sequence belongs to the DHBP synthase family. Homodimer. Mg(2+) serves as cofactor. It depends on Mn(2+) as a cofactor.

The enzyme catalyses D-ribulose 5-phosphate = (2S)-2-hydroxy-3-oxobutyl phosphate + formate + H(+). It participates in cofactor biosynthesis; riboflavin biosynthesis; 2-hydroxy-3-oxobutyl phosphate from D-ribulose 5-phosphate: step 1/1. In terms of biological role, catalyzes the conversion of D-ribulose 5-phosphate to formate and 3,4-dihydroxy-2-butanone 4-phosphate. This is 3,4-dihydroxy-2-butanone 4-phosphate synthase from Sodalis glossinidius (strain morsitans).